The following is a 208-amino-acid chain: Probable very-long-chain (3R)-3-hydroxyacyl-CoA dehydratase (208 aa).

The Cytoplasmic segment spans residues 1-11 (MSKILKIQYLK). Residues 12-35 (LYNVISCFLWMSVLLRTGLIWGIT) traverse the membrane as a helical segment. At 36 to 46 (KDTAVVFHETN) the chain is on the lumenal side. The helical transmembrane segment at 47–67 (TLVRWVQTLAIAEVFHSIFGL) threads the bilayer. The Cytoplasmic segment spans residues 68–78 (VSSSPLTTIIQ). Residues 79–97 (VASRLYLVWGVCYPFSYVI) form a helical membrane-spanning segment. Topologically, residues 98-102 (EGSPI) are lumenal. Residues 103-123 (YLSMIIAWSITEIIRYAFYAF) form a helical membrane-spanning segment. Residues 124-134 (NLNGDIPAFLT) lie on the Cytoplasmic side of the membrane. A helical transmembrane segment spans residues 135-157 (WLRYNTFLILYPIGAGSEFLLVL). Residues Tyr145 and Glu152 contribute to the active site. At 158–171 (KSRIAAQYVWSLNK) the chain is on the lumenal side. A helical transmembrane segment spans residues 172–192 (LLWPILMSIYPPGLYIMYTHM). Residues 193 to 208 (LAQRRKISKRAAARRT) lie on the Cytoplasmic side of the membrane.

The protein belongs to the very long-chain fatty acids dehydratase HACD family.

Its subcellular location is the endoplasmic reticulum membrane. It catalyses the reaction a very-long-chain (3R)-3-hydroxyacyl-CoA = a very-long-chain (2E)-enoyl-CoA + H2O. The protein operates within lipid metabolism; fatty acid biosynthesis. In terms of biological role, catalyzes the third of the four reactions of the long-chain fatty acids elongation cycle. This endoplasmic reticulum-bound enzymatic process, allows the addition of two carbons to the chain of long- and very long-chain fatty acids/VLCFAs per cycle. This enzyme catalyzes the dehydration of the 3-hydroxyacyl-CoA intermediate into trans-2,3-enoyl-CoA, within each cycle of fatty acid elongation. Thereby, it participates in the production of VLCFAs of different chain lengths that are involved in multiple biological processes as precursors of membrane lipids and lipid mediators. This is Probable very-long-chain (3R)-3-hydroxyacyl-CoA dehydratase from Schizosaccharomyces pombe (strain 972 / ATCC 24843) (Fission yeast).